Here is an 80-residue protein sequence, read N- to C-terminus: UPF0270 protein VFMJ11_0205 (80 aa).

Belongs to the UPF0270 family.

This Aliivibrio fischeri (strain MJ11) (Vibrio fischeri) protein is UPF0270 protein VFMJ11_0205.